The sequence spans 198 residues: Virion membrane protein A17 precursor homolog (198 aa).

Residues 1-55 (MDNNYLNYYNVFEEFDAGAGIKEKELFTEEQQLSFLPKKGLGNGGFDGVERLYSN) lie on the Virion surface side of the membrane. A helical transmembrane segment spans residues 56 to 76 (IINNNDIKSLLALIMLVFAIN). At 77 to 145 (TNSLVALIFI…TSKISKGFKR (69 aa)) the chain is on the intravirion side. A helical membrane pass occupies residues 146-166 (AIDVVLLVILGFYIVKIYGID). Over 167-198 (RQISIPSRRYCRQMSGPSSLENLNAFQTHSNY) the chain is Virion surface. Residue tyrosine 198 is modified to Phosphotyrosine.

It belongs to the chordopoxvirinae A17 family. Interacts (via N-terminus) with D13 scaffold; this interaction helps D13 to associate with membranes. Interacts with A14. Interacts with A27; this interaction allows A27 to be anchored in the mature virion (MV) membrane. Part of a complex composed of A17, A25, A26 and A27. Post-translationally, the 22 kDa precursor is probably cleaved by the I7 protease during virus maturation. In terms of processing, phosphorylated on tyrosine and threonine. Its phosphorylation state is regulated by the F10 kinase and the H1 phosphatase. Phosphorylation by F10 kinase seems to be required to form the membranes associated with IV.

It is found in the virion membrane. In terms of biological role, envelope protein which participates in virus morphogenesis. Needed for an early step in viral crescent membrane formation by interacting with D13 scaffold protein. Its interaction with D13 scaffold protein leads to the formation of rigid, crescent-shaped membranes that assemble around the cytoplasmic virus factory. Membrane anchor for the protein A27. A17-A27 virus envelope protein might be involved in fusion or attachment, and can further associate to A26. The protein is Virion membrane protein A17 precursor homolog of Fowlpox virus (strain NVSL) (FPV).